Consider the following 217-residue polypeptide: Proteasome subunit beta type-9 (217 aa).

The propeptide at 1–18 (MLDESLEPGWLSEEVKTG) is removed in mature form. The active-site Nucleophile is Thr19.

The protein belongs to the peptidase T1B family. In terms of assembly, the 26S proteasome consists of a 20S proteasome core and two 19S regulatory subunits. The 20S proteasome core is composed of 28 subunits that are arranged in four stacked rings, resulting in a barrel-shaped structure. The two end rings are each formed by seven alpha subunits, and the two central rings are each formed by seven beta subunits. The catalytic chamber with the active sites is on the inside of the barrel. Component of the immunoproteasome, where it displaces the equivalent housekeeping subunit PSMB6. In terms of processing, autocleaved. The resulting N-terminal Thr residue of the mature subunit is responsible for the nucleophile proteolytic activity.

The protein resides in the cytoplasm. The protein localises to the nucleus. The enzyme catalyses Cleavage of peptide bonds with very broad specificity.. Functionally, the proteasome is a multicatalytic proteinase complex which is characterized by its ability to cleave peptides with Arg, Phe, Tyr, Leu, and Glu adjacent to the leaving group at neutral or slightly basic pH. The proteasome has an ATP-dependent proteolytic activity. This subunit is involved in antigen processing to generate class I binding peptides. This Oncorhynchus mykiss (Rainbow trout) protein is Proteasome subunit beta type-9 (psmb9).